A 714-amino-acid polypeptide reads, in one-letter code: RanBP-type and C3HC4-type zinc finger-containing protein 1 (714 aa).

Disordered regions lie at residues Met1–Gly23 and Ser152–Pro172. Positions Pro14–Gly23 are enriched in polar residues. A Ubiquitin-like domain is found at Leu225–Arg301. The RanBP2-type zinc-finger motif lies at Arg394–Glu426. The tract at residues Glu482–Cys710 is TRIAD supradomain. Residues Cys486, Cys489, Cys504, His506, Cys509, Cys512, Cys527, Cys536, Cys575, Cys580, Cys595, Cys598, Cys603, Cys606, His610, Cys615, Cys651, and Cys654 each coordinate Zn(2+). Residues Cys486–Cys536 form an RING-type 1 zinc finger. An IBR-type zinc finger spans residues Gln555 to Cys615. The segment at Cys651–Thr680 adopts an RING-type 2; atypical zinc-finger fold. Residue Cys664 is part of the active site. Positions 669 and 672 each coordinate Zn(2+).

The protein belongs to the RBR family. In terms of assembly, component of the LUBAC complex (linear ubiquitin chain assembly complex).

The enzyme catalyses [E2 ubiquitin-conjugating enzyme]-S-ubiquitinyl-L-cysteine + [acceptor protein]-L-lysine = [E2 ubiquitin-conjugating enzyme]-L-cysteine + [acceptor protein]-N(6)-ubiquitinyl-L-lysine.. The protein operates within protein modification; protein ubiquitination. Component of the LUBAC complex which conjugates linear ('Met-1'-linked) polyubiquitin chains to substrates and plays a key role in NF-kappa-B activation and regulation of inflammation. LUBAC conjugates linear polyubiquitin to ikbkg and RIPK1 and is involved in activation of the canonical NF-kappa-B and the JNK signaling pathways. Linear ubiquitination mediated by the LUBAC complex interferes with TNF-induced cell death and thereby prevents inflammation. LUBAC is recruited to the TNF-R1 signaling complex (TNF-RSC) to conjugate linear polyubiquitin to ikbkg and possibly other components contributing to the stability of the complex. The LUBAC complex is also involved in innate immunity by conjugating linear polyubiquitin chains at the surface of bacteria invading the cytosol to form the ubiquitin coat surrounding bacteria. LUBAC is not able to initiate formation of the bacterial ubiquitin coat, and can only promote formation of linear polyubiquitins on pre-existing ubiquitin. The bacterial ubiquitin coat acts as an 'eat-me' signal for xenophagy and promotes NF-kappa-B activation. Binds polyubiquitin of different linkage types. In Danio rerio (Zebrafish), this protein is RanBP-type and C3HC4-type zinc finger-containing protein 1 (rbck1).